A 767-amino-acid chain; its full sequence is uncharacterized protein (767 aa).

Disordered stretches follow at residues 171-209 (LPVW…LRTP), 314-340 (ETEA…CQEE), and 533-566 (RDHG…PRGF). Composition is skewed to basic and acidic residues over residues 322–331 (PDPRPEKDAK) and 552–564 (ETKD…RDPR).

This is an uncharacterized protein from Homo sapiens (Human).